A 419-amino-acid polypeptide reads, in one-letter code: D-inositol 3-phosphate glycosyltransferase (419 aa).

His9 serves as a coordination point for 1D-myo-inositol 3-phosphate. Residues 15-16 (QP) and Gly23 each bind UDP-N-acetyl-alpha-D-glucosamine. 1D-myo-inositol 3-phosphate is bound by residues 20–25 (DAGGMN), Lys78, Tyr110, Thr134, and Arg154. 3 residues coordinate UDP-N-acetyl-alpha-D-glucosamine: Arg231, Lys236, and Arg295. Mg(2+) contacts are provided by Tyr304, Arg305, and Ala307. Positions 317 and 325 each coordinate UDP-N-acetyl-alpha-D-glucosamine. Residue Thr331 participates in Mg(2+) binding.

This sequence belongs to the glycosyltransferase group 1 family. MshA subfamily. Homodimer.

It catalyses the reaction 1D-myo-inositol 3-phosphate + UDP-N-acetyl-alpha-D-glucosamine = 1D-myo-inositol 2-acetamido-2-deoxy-alpha-D-glucopyranoside 3-phosphate + UDP + H(+). In terms of biological role, catalyzes the transfer of a N-acetyl-glucosamine moiety to 1D-myo-inositol 3-phosphate to produce 1D-myo-inositol 2-acetamido-2-deoxy-glucopyranoside 3-phosphate in the mycothiol biosynthesis pathway. In Corynebacterium jeikeium (strain K411), this protein is D-inositol 3-phosphate glycosyltransferase.